The following is a 505-amino-acid chain: Serine/threonine-protein kinase D (505 aa).

The region spanning 9-271 (YEIVKSLGSG…AMYQALHSLI (263 aa)) is the Protein kinase domain. ATP contacts are provided by residues 15-23 (LGSGGFGDT) and lysine 40. The Proton acceptor role is filled by aspartate 136. In terms of domain architecture, SH3b spans 436-505 (GASATIGGIP…GWIASQLVNF (70 aa)).

This sequence belongs to the protein kinase superfamily. Ser/Thr protein kinase family.

The catalysed reaction is L-seryl-[protein] + ATP = O-phospho-L-seryl-[protein] + ADP + H(+). It carries out the reaction L-threonyl-[protein] + ATP = O-phospho-L-threonyl-[protein] + ADP + H(+). The polypeptide is Serine/threonine-protein kinase D (spkD) (Synechocystis sp. (strain ATCC 27184 / PCC 6803 / Kazusa)).